The sequence spans 425 residues: Nicotinate dehydrogenase large molybdopterin subunit (425 aa).

Residues Gln208 and 238 to 240 (GFG) each bind Se-Mo-molybdopterin cytosine dinucleotide.

It belongs to the xanthine dehydrogenase family. In terms of assembly, heterooctamer of NDHM, NDHL, NDHS and NDHF. Dimer of heterotetramers. Se-Mo-molybdopterin cytosine dinucleotide serves as cofactor.

It carries out the reaction nicotinate + NADP(+) + H2O = 6-hydroxynicotinate + NADPH + H(+). The protein operates within cofactor degradation; nicotinate degradation; 6-hydroxynicotinate from nicotinate: step 1/1. Its activity is regulated as follows. Reversibly inactivated by selenide and sulfide. Not inhibited by cyanide. Catalyzes the hydroxylation of nicotinate to 6-hydroxynicotinate. Also active against 2-pyrazinecarboxylic acid, but inactive against other nicotinate analogs. The polypeptide is Nicotinate dehydrogenase large molybdopterin subunit (ndhL) (Eubacterium barkeri (Clostridium barkeri)).